Here is a 493-residue protein sequence, read N- to C-terminus: Glutamyl-tRNA(Gln) amidotransferase subunit A (493 aa).

Residues Lys78 and Ser158 each act as charge relay system in the active site. Ser182 functions as the Acyl-ester intermediate in the catalytic mechanism.

It belongs to the amidase family. GatA subfamily. In terms of assembly, heterotrimer of A, B and C subunits.

It catalyses the reaction L-glutamyl-tRNA(Gln) + L-glutamine + ATP + H2O = L-glutaminyl-tRNA(Gln) + L-glutamate + ADP + phosphate + H(+). Allows the formation of correctly charged Gln-tRNA(Gln) through the transamidation of misacylated Glu-tRNA(Gln) in organisms which lack glutaminyl-tRNA synthetase. The reaction takes place in the presence of glutamine and ATP through an activated gamma-phospho-Glu-tRNA(Gln). The polypeptide is Glutamyl-tRNA(Gln) amidotransferase subunit A (Methylorubrum extorquens (strain CM4 / NCIMB 13688) (Methylobacterium extorquens)).